The chain runs to 370 residues: Cytochrome b (370 aa).

Helical transmembrane passes span 25-45 (FGSM…FLAV), 69-90 (WMMQ…YIHI), 105-125 (WLSG…GYVL), and 170-190 (FFAL…LHIL). Heme b contacts are provided by His75 and His89. The heme b site is built by His174 and His188. A ubiquinone is bound at residue His193. Helical transmembrane passes span 218 to 238 (YKDM…VSFF), 280 to 300 (LGGA…PFTH), 312 to 332 (LMQL…WTAT), and 339 to 358 (FTTI…ISNP).

The protein belongs to the cytochrome b family. In terms of assembly, the cytochrome bc1 complex contains 3 respiratory subunits (MT-CYB, CYC1 and UQCRFS1), 2 core proteins (UQCRC1 and UQCRC2) and probably 6 low-molecular weight proteins. Requires heme b as cofactor.

The protein resides in the mitochondrion inner membrane. Functionally, component of the ubiquinol-cytochrome c reductase complex (complex III or cytochrome b-c1 complex) that is part of the mitochondrial respiratory chain. The b-c1 complex mediates electron transfer from ubiquinol to cytochrome c. Contributes to the generation of a proton gradient across the mitochondrial membrane that is then used for ATP synthesis. This chain is Cytochrome b (MT-CYB), found in Chilabothrus strigilatus strigilatus (New Providence boa constrictor).